A 313-amino-acid polypeptide reads, in one-letter code: Probable myosin light chain kinase DDB_G0292624 (313 aa).

The 259-residue stretch at 6-264 folds into the Protein kinase domain; it reads YELHKEIGKG…AKQALEHPWI (259 aa). Residues 12–20 and lysine 35 each bind ATP; that span reads IGKGAFSVV. The active-site Proton acceptor is aspartate 125.

This sequence belongs to the protein kinase superfamily. CAMK Ser/Thr protein kinase family. CaMK subfamily.

It carries out the reaction L-seryl-[myosin light chain] + ATP = O-phospho-L-seryl-[myosin light chain] + ADP + H(+). The catalysed reaction is L-threonyl-[myosin light chain] + ATP = O-phospho-L-threonyl-[myosin light chain] + ADP + H(+). Does not have a calmodulin-binding domain. Functionally, may phosphorylate a specific serine in the N-terminus of a myosin light chain. The protein is Probable myosin light chain kinase DDB_G0292624 of Dictyostelium discoideum (Social amoeba).